We begin with the raw amino-acid sequence, 684 residues long: Phenoloxidase 2 (684 aa).

A propeptide spans 1–51 (MSNTAVLNDLVALYDRPTEPMFRVKAKKSFKVPKEYVTDRFKNVAVEISNR) (removed by PPAF1). N-linked (GlcNAc...) asparagine glycosylation is found at Asn81 and Asn91. Residues His209, His213, and His238 each coordinate Cu cation. Asn330 is a glycosylation site (N-linked (GlcNAc...) asparagine). The active-site Proton acceptor is Glu350. Positions 365, 369, and 405 each coordinate Cu cation. Residues Asn416, Asn487, Asn491, and Asn546 are each glycosylated (N-linked (GlcNAc...) asparagine). Intrachain disulfides connect Cys581/Cys623 and Cys583/Cys630.

It belongs to the tyrosinase family. Dimer. Might form a homodimer or a heterodimer with PPO1. Might interact with PPAF2 (via CLIP domain); the interaction might be required for PPO2 activity. The cofactor is Cu(2+). Post-translationally, precursor cleaved by PPAF1. As to expression, hemocytes.

Its subcellular location is the secreted. Its function is as follows. This is a copper-containing oxidase that functions in the formation of pigments such as melanins and other polyphenolic compounds. Catalyzes the oxidation of o-diphenols (N-acetyldopamine, 4-methylcatechol and dopamine). Cannot oxidize monophenols and p-phenols (L-tyrosine, tyramine, gentisic acid and hydroquinone). Binds to the surface of hemocytes and is involved in hemocyte melanization. Activation of the enzyme in response to bacterial lipopolysaccharides (LPS) suggests it may play a role in innate immunity. The chain is Phenoloxidase 2 from Holotrichia diomphalia (Korean black chafer).